Here is an 803-residue protein sequence, read N- to C-terminus: Regulatory protein SWI6 (803 aa).

A compositionally biased stretch (acidic residues) spans 108-117; that stretch reads EPETDQDEED. Residues 108-150 form a disordered region; that stretch reads EPETDQDEEDPSHSKLPENKTKSENSKDNISSKRINNLQDMSL. Over residues 118-138 the composition is skewed to basic and acidic residues; that stretch reads PSHSKLPENKTKSENSKDNIS. A compositionally biased stretch (polar residues) spans 139–149; the sequence is SKRINNLQDMS. S149 bears the Phosphoserine mark. S160 bears the Phosphoserine; by CDC28 mark. 2 disordered regions span residues 169–212 and 266–288; these read TSVI…RTAG and PTSL…QQQQ. S176 carries the post-translational modification Phosphoserine. 2 positions are modified to phosphothreonine: T179 and T182. Residues 270-288 are compositionally biased toward low complexity; that stretch reads NNDSSNRNSEGGSSNQQQQ. ANK repeat units lie at residues 318–346, 347–383, 384–469, 470–498, and 499–514; these read GNTP…NRLY, GDNM…CLIL, EDSM…QDSN, GDTC…DPFI, and ANKS…AGTS. A disordered region spans residues 512–540; it reads GTSKLQNTNGGDENSKMVSKGDYDGQKNG. Residues 514-523 are compositionally biased toward polar residues; the sequence is SKLQNTNGGD. Residues 524–538 show a composition bias toward basic and acidic residues; sequence ENSKMVSKGDYDGQK. At S547 the chain carries Phosphoserine.

As to quaternary structure, component of the transcription complex MCB-binding factor (MBF) composed of SWI6 and MBP1. Component of the transcription complex SCB-binding factor (SBF) composed of SWI6 and SWI4. Interacts with MSA1 and STB1. In terms of processing, phosphorylated by CDC28 and dephosphorylated by CDC14.

The protein localises to the nucleus. It localises to the cytoplasm. In terms of biological role, part of a complex involved in cell-cycle-dependent transcription. SWI4 and SWI6 are required for formation of the cell-cycle box factor-DNA complex. The repeated element in the upstream region of HO (5'-CACGAAAA-3') is called the cell cycle box (CCB). The polypeptide is Regulatory protein SWI6 (SWI6) (Saccharomyces cerevisiae (strain ATCC 204508 / S288c) (Baker's yeast)).